We begin with the raw amino-acid sequence, 113 residues long: U11-theraphotoxin-Hhn1k (113 aa).

The first 21 residues, 1–21 (MNTVRVTFLLVFVLAVSLGQA), serve as a signal peptide directing secretion. Positions 22-74 (DKDENRMEMQEKTEQGKSYLDFAENLLLQKLEELEAKLLEEDSEESRNSRQKR) are excised as a propeptide. A disordered region spans residues 61–83 (EEDSEESRNSRQKRCIGEGVPCD). Intrachain disulfides connect C75–C90, C82–C95, and C89–C110.

This sequence belongs to the neurotoxin 14 (magi-1) family. 01 (HNTX-16) subfamily. As to expression, expressed by the venom gland.

It is found in the secreted. Functionally, probable ion channel inhibitor. The protein is U11-theraphotoxin-Hhn1k of Cyriopagopus hainanus (Chinese bird spider).